A 185-amino-acid polypeptide reads, in one-letter code: Large ribosomal subunit protein bL25 (185 aa).

Belongs to the bacterial ribosomal protein bL25 family. CTC subfamily. In terms of assembly, part of the 50S ribosomal subunit; part of the 5S rRNA/L5/L18/L25 subcomplex. Contacts the 5S rRNA. Binds to the 5S rRNA independently of L5 and L18.

This is one of the proteins that binds to the 5S RNA in the ribosome where it forms part of the central protuberance. In Chlamydia caviae (strain ATCC VR-813 / DSM 19441 / 03DC25 / GPIC) (Chlamydophila caviae), this protein is Large ribosomal subunit protein bL25.